The chain runs to 458 residues: UDP-N-acetylmuramoylalanine--D-glutamate ligase (458 aa).

124-130 (GSDGKTT) contributes to the ATP binding site.

The protein belongs to the MurCDEF family.

It localises to the cytoplasm. The enzyme catalyses UDP-N-acetyl-alpha-D-muramoyl-L-alanine + D-glutamate + ATP = UDP-N-acetyl-alpha-D-muramoyl-L-alanyl-D-glutamate + ADP + phosphate + H(+). It functions in the pathway cell wall biogenesis; peptidoglycan biosynthesis. Its function is as follows. Cell wall formation. Catalyzes the addition of glutamate to the nucleotide precursor UDP-N-acetylmuramoyl-L-alanine (UMA). The chain is UDP-N-acetylmuramoylalanine--D-glutamate ligase from Clostridium botulinum (strain 657 / Type Ba4).